A 382-amino-acid polypeptide reads, in one-letter code: Succinate--CoA ligase [ADP-forming] subunit beta (382 aa).

An ATP-grasp domain is found at R9–R237. ATP-binding positions include K45, G52–G54, I94, and E99. Residues N192 and D206 each contribute to the Mg(2+) site. Residues N257 and G314–T316 each bind substrate.

It belongs to the succinate/malate CoA ligase beta subunit family. Heterotetramer of two alpha and two beta subunits. Mg(2+) is required as a cofactor.

The catalysed reaction is succinate + ATP + CoA = succinyl-CoA + ADP + phosphate. The enzyme catalyses GTP + succinate + CoA = succinyl-CoA + GDP + phosphate. It participates in carbohydrate metabolism; tricarboxylic acid cycle; succinate from succinyl-CoA (ligase route): step 1/1. In terms of biological role, succinyl-CoA synthetase functions in the citric acid cycle (TCA), coupling the hydrolysis of succinyl-CoA to the synthesis of either ATP or GTP and thus represents the only step of substrate-level phosphorylation in the TCA. The beta subunit provides nucleotide specificity of the enzyme and binds the substrate succinate, while the binding sites for coenzyme A and phosphate are found in the alpha subunit. This Chloroflexus aggregans (strain MD-66 / DSM 9485) protein is Succinate--CoA ligase [ADP-forming] subunit beta.